Reading from the N-terminus, the 578-residue chain is Zinc finger protein with KRAB and SCAN domains 8 (578 aa).

Residues 1–20 form a disordered region; it reads MAEESRKPSAPSPPDQTPEE. S12 carries the post-translational modification Phosphoserine. Residue K26 forms a Glycyl lysine isopeptide (Lys-Gly) (interchain with G-Cter in SUMO2) linkage. The region spanning 51-133 is the SCAN box domain; it reads RLRFRQLCYQ…TLLEDLERQI (83 aa). The disordered stretch occupies residues 158–205; sequence ASAPEPPNTQLQSEATQHKSPVPQESQERSMSTSQSPTRSQKGSSGDQ. The segment covering 165-205 has biased composition (polar residues); that stretch reads NTQLQSEATQHKSPVPQESQERSMSTSQSPTRSQKGSSGDQ. Residues K176 and K199 each participate in a glycyl lysine isopeptide (Lys-Gly) (interchain with G-Cter in SUMO2) cross-link. S201 is subject to Phosphoserine. One can recognise a KRAB domain in the interval 220–316; that stretch reads EKIEDMAVSL…GRLERQRGNP (97 aa). Residues K221, K272, and K288 each participate in a glycyl lysine isopeptide (Lys-Gly) (interchain with G-Cter in SUMO2) cross-link. 2 consecutive C2H2-type zinc fingers follow at residues 322-344 and 350-372; these read HKCD…WRIH and YQCN…QDIH. Glycyl lysine isopeptide (Lys-Gly) (interchain with G-Cter in SUMO2) cross-links involve residues K374 and K376. 7 C2H2-type zinc fingers span residues 378–400, 406–428, 434–456, 462–484, 490–512, 518–540, and 546–568; these read YHCK…QRIH, YQCN…QRIH, YECN…QRIH, YECD…QRSH, YKCN…QRIH, and YKCK…LRIH. Glycyl lysine isopeptide (Lys-Gly) (interchain with G-Cter in SUMO2) cross-links involve residues K413 and K441. K502 participates in a covalent cross-link: Glycyl lysine isopeptide (Lys-Gly) (interchain with G-Cter in SUMO2). K572 is covalently cross-linked (Glycyl lysine isopeptide (Lys-Gly) (interchain with G-Cter in SUMO2)).

Belongs to the krueppel C2H2-type zinc-finger protein family.

It localises to the nucleus. May be involved in transcriptional regulation. The protein is Zinc finger protein with KRAB and SCAN domains 8 (ZKSCAN8) of Pan paniscus (Pygmy chimpanzee).